The chain runs to 114 residues: Iron-sulfur cluster insertion protein ErpA (114 aa).

Residues Cys-42, Cys-106, and Cys-108 each coordinate iron-sulfur cluster.

It belongs to the HesB/IscA family. As to quaternary structure, homodimer. The cofactor is iron-sulfur cluster.

Required for insertion of 4Fe-4S clusters for at least IspG. This chain is Iron-sulfur cluster insertion protein ErpA, found in Salmonella typhi.